The primary structure comprises 217 residues: tRNA (guanine-N(7)-)-methyltransferase (217 aa).

Glu44, Asp69, Asp96, and Asp118 together coordinate S-adenosyl-L-methionine. Asp118 is an active-site residue. Residue Lys122 coordinates substrate. The interaction with RNA stretch occupies residues 124–129 (RHEKRR). Substrate is bound by residues Asp154 and 193–196 (TEYE).

Belongs to the class I-like SAM-binding methyltransferase superfamily. TrmB family.

It carries out the reaction guanosine(46) in tRNA + S-adenosyl-L-methionine = N(7)-methylguanosine(46) in tRNA + S-adenosyl-L-homocysteine. The protein operates within tRNA modification; N(7)-methylguanine-tRNA biosynthesis. Its function is as follows. Catalyzes the formation of N(7)-methylguanine at position 46 (m7G46) in tRNA. In Lactococcus lactis subsp. lactis (strain IL1403) (Streptococcus lactis), this protein is tRNA (guanine-N(7)-)-methyltransferase.